A 359-amino-acid polypeptide reads, in one-letter code: Fe-S cluster assembly protein DRE2 (359 aa).

An N-terminal SAM-like domain region spans residues 1–148 (MASTGRVLLL…KPDVAAQQAV (148 aa)). Disordered regions lie at residues 97–116 (NKAWGLRSSGNNSDDDNDND) and 149–210 (PLKL…PSGV). The tract at residues 149–246 (PLKLGRRKKE…EDELLGEDDM (98 aa)) is linker. Residues 152–164 (LGRRKKEKERRHP) show a composition bias toward basic residues. A compositionally biased stretch (polar residues) spans 167–183 (NDVTNGKVNAPSSNGVN). Over residues 184–200 (ASTSTATATATTTTTTT) the composition is skewed to low complexity. 4 residues coordinate [2Fe-2S] cluster: C256, C267, C270, and C272. Residues 256 to 272 (CRPKPGKRRRACKDCSC) are fe-S binding site A. [4Fe-4S] cluster contacts are provided by C322, C325, C333, and C336. 2 consecutive short sequence motifs (cx2C motif) follow at residues 322–325 (CGNC) and 333–336 (CDGC). Residues 322–336 (CGNCSLGDAFRCDGC) form a fe-S binding site B region.

Belongs to the anamorsin family. Monomer. Interacts with TAH18. Interacts with MIA40. It depends on [2Fe-2S] cluster as a cofactor. [4Fe-4S] cluster is required as a cofactor.

The protein localises to the cytoplasm. Its subcellular location is the mitochondrion intermembrane space. In terms of biological role, component of the cytosolic iron-sulfur (Fe-S) protein assembly (CIA) machinery required for the maturation of extramitochondrial Fe-S proteins. Part of an electron transfer chain functioning in an early step of cytosolic Fe-S biogenesis, facilitating the de novo assembly of a [4Fe-4S] cluster on the scaffold complex CFD1-NBP35. Electrons are transferred to DRE2 from NADPH via the FAD- and FMN-containing protein TAH18. TAH18-DRE2 are also required for the assembly of the diferric tyrosyl radical cofactor of ribonucleotide reductase (RNR), probably by providing electrons for reduction during radical cofactor maturation in the catalytic small subunit RNR2. The sequence is that of Fe-S cluster assembly protein DRE2 from Blastomyces gilchristii (strain SLH14081) (Blastomyces dermatitidis).